Consider the following 274-residue polypeptide: Large ribosomal subunit protein uL2c (274 aa).

The segment at 230-252 is disordered; it reads HPHGGGEGRSPIGRSKPLTPWGK.

The protein belongs to the universal ribosomal protein uL2 family. In terms of assembly, part of the 50S ribosomal subunit.

It is found in the plastid. The polypeptide is Large ribosomal subunit protein uL2c (rpl2) (Euglena longa (Euglenophycean alga)).